Consider the following 456-residue polypeptide: Sulfoacetaldehyde dehydrogenase (456 aa).

G213 to A218 contacts NAD(+). Active-site residues include E233 and C267.

The protein belongs to the aldehyde dehydrogenase family. As to quaternary structure, homotetramer.

The catalysed reaction is sulfoacetaldehyde + NAD(+) + H2O = sulfoacetate + NADH + 2 H(+). Its function is as follows. Mediates conversion of 2-sulfoacetaldehyde into sulfoacetate. The enzyme is specific for NAD; NADP is not a substrate. Part of a pathway that can utilize the amino group of taurine as a sole source of nitrogen for growth. This is Sulfoacetaldehyde dehydrogenase (safD) from Neptuniibacter caesariensis.